The following is a 179-amino-acid chain: Large ribosomal subunit protein uL5 (179 aa).

Belongs to the universal ribosomal protein uL5 family. As to quaternary structure, part of the 50S ribosomal subunit; part of the 5S rRNA/L5/L18/L25 subcomplex. Contacts the 5S rRNA and the P site tRNA. Forms a bridge to the 30S subunit in the 70S ribosome.

Its function is as follows. This is one of the proteins that bind and probably mediate the attachment of the 5S RNA into the large ribosomal subunit, where it forms part of the central protuberance. In the 70S ribosome it contacts protein S13 of the 30S subunit (bridge B1b), connecting the 2 subunits; this bridge is implicated in subunit movement. Contacts the P site tRNA; the 5S rRNA and some of its associated proteins might help stabilize positioning of ribosome-bound tRNAs. The protein is Large ribosomal subunit protein uL5 of Saccharophagus degradans (strain 2-40 / ATCC 43961 / DSM 17024).